Consider the following 210-residue polypeptide: MKKEIASHLLEIGAVFLQPNDPFTWSSGMKSPIYCDNRLTLSYPKVRQTIAAGLEELIKEHFPTVEVIAGTATAGIAHAAWVSDRMDLPMCYVRSKAKGHGKGNQIEGKAEKGQKVVVVEDLISTGGSAITCVEALREAGCEVLGIVSIFTYELEAGKEKLEAANVASYSLSDYSALTEVAAEKGIIGQAETKKLQEWRKNPADEAWITA.

5-phospho-alpha-D-ribose 1-diphosphate-binding positions include arginine 94, lysine 98, histidine 100, and 120–128 (EDLISTGGS). Serine 124 is an orotate binding site.

It belongs to the purine/pyrimidine phosphoribosyltransferase family. PyrE subfamily. Homodimer. It depends on Mg(2+) as a cofactor.

The catalysed reaction is orotidine 5'-phosphate + diphosphate = orotate + 5-phospho-alpha-D-ribose 1-diphosphate. It functions in the pathway pyrimidine metabolism; UMP biosynthesis via de novo pathway; UMP from orotate: step 1/2. In terms of biological role, catalyzes the transfer of a ribosyl phosphate group from 5-phosphoribose 1-diphosphate to orotate, leading to the formation of orotidine monophosphate (OMP). The sequence is that of Orotate phosphoribosyltransferase from Bacillus anthracis (strain A0248).